The following is a 98-amino-acid chain: C-X-C motif chemokine 10 (98 aa).

Residues Met1 to Gly21 form the signal peptide. Arg26 carries the citrulline modification. 2 cysteine pairs are disulfide-bonded: Cys30–Cys57 and Cys32–Cys74.

It belongs to the intercrine alpha (chemokine CxC) family. Monomer, dimer, and tetramer. Interacts with CXCR3 (via N-terminus). Expressed in the spleen, thymus, lymph nodes and liver. Expressed in astrocytes, microglia, and neurons.

It localises to the secreted. Pro-inflammatory cytokine that is involved in a wide variety of processes such as chemotaxis, differentiation, and activation of peripheral immune cells, regulation of cell growth, apoptosis and modulation of angiostatic effects. Plays thereby an important role during viral infections by stimulating the activation and migration of immune cells to the infected sites. Mechanistically, binding of CXCL10 to the CXCR3 receptor activates G protein-mediated signaling and results in downstream activation of phospholipase C-dependent pathway, an increase in intracellular calcium production and actin reorganization. In turn, recruitment of activated Th1 lymphocytes occurs at sites of inflammation. Activation of the CXCL10/CXCR3 axis also plays an important role in neurons in response to brain injury for activating microglia, the resident macrophage population of the central nervous system, and directing them to the lesion site. This recruitment is an essential element for neuronal reorganization. This chain is C-X-C motif chemokine 10 (Cxcl10), found in Mus musculus (Mouse).